The chain runs to 229 residues: Leucyl/phenylalanyl-tRNA--protein transferase (229 aa).

It belongs to the L/F-transferase family.

The protein resides in the cytoplasm. It carries out the reaction N-terminal L-lysyl-[protein] + L-leucyl-tRNA(Leu) = N-terminal L-leucyl-L-lysyl-[protein] + tRNA(Leu) + H(+). The enzyme catalyses N-terminal L-arginyl-[protein] + L-leucyl-tRNA(Leu) = N-terminal L-leucyl-L-arginyl-[protein] + tRNA(Leu) + H(+). The catalysed reaction is L-phenylalanyl-tRNA(Phe) + an N-terminal L-alpha-aminoacyl-[protein] = an N-terminal L-phenylalanyl-L-alpha-aminoacyl-[protein] + tRNA(Phe). In terms of biological role, functions in the N-end rule pathway of protein degradation where it conjugates Leu, Phe and, less efficiently, Met from aminoacyl-tRNAs to the N-termini of proteins containing an N-terminal arginine or lysine. The protein is Leucyl/phenylalanyl-tRNA--protein transferase of Pseudomonas syringae pv. tomato (strain ATCC BAA-871 / DC3000).